We begin with the raw amino-acid sequence, 130 residues long: Large ribosomal subunit protein bL17 (130 aa).

The protein belongs to the bacterial ribosomal protein bL17 family. As to quaternary structure, part of the 50S ribosomal subunit. Contacts protein L32.

The sequence is that of Large ribosomal subunit protein bL17 from Shewanella halifaxensis (strain HAW-EB4).